The chain runs to 375 residues: Ribosomal RNA large subunit methyltransferase G (375 aa).

This sequence belongs to the methyltransferase superfamily. RlmG family.

It is found in the cytoplasm. It catalyses the reaction guanosine(1835) in 23S rRNA + S-adenosyl-L-methionine = N(2)-methylguanosine(1835) in 23S rRNA + S-adenosyl-L-homocysteine + H(+). Its function is as follows. Specifically methylates the guanine in position 1835 (m2G1835) of 23S rRNA. This Stutzerimonas stutzeri (strain A1501) (Pseudomonas stutzeri) protein is Ribosomal RNA large subunit methyltransferase G.